The following is an 89-amino-acid chain: Helix-loop-helix protein 15 (89 aa).

The segment at M1–K32 is disordered. The span at E22–K32 shows a compositional bias: basic residues. The basic motif stretch occupies residues K32 to V45. Positions K32–L84 constitute a bHLH domain. The tract at residues E46 to L84 is helix-loop-helix motif.

In terms of tissue distribution, expressed in sensory head neurons of the lateral ganglion.

It is found in the nucleus. Its function is as follows. Transcription factor which binds the E box motif 5'-CA[TC][AG]TG-3'. Involved in modulating physiological aging, probably by regulating expression of branched-chain amino acid transferase-1, bcat-1. The sequence is that of Helix-loop-helix protein 15 from Caenorhabditis elegans.